The primary structure comprises 988 residues: Transposase for transposon Tn21 (988 aa).

The disordered stretch occupies residues 672–696 (GDGTTSSSDEQNFRTASKAKSTGHI). The segment covering 674–695 (GTTSSSDEQNFRTASKAKSTGH) has biased composition (polar residues).

It belongs to the transposase 7 family.

Required for transposition of transposon Tn21. The sequence is that of Transposase for transposon Tn21 (tnpA) from Escherichia coli.